A 131-amino-acid polypeptide reads, in one-letter code: QRFP-like peptide (131 aa).

The first 25 residues, 1-25, serve as a signal peptide directing secretion; the sequence is MGVRVMRSRICVIGLLVLMLTQSEA. Positions 26–94 are excised as a propeptide; the sequence is YSFREKSWRT…DDGISPADKR (69 aa). The interval 48–131 is disordered; sequence RRDGGDQAPS…RESRRSFGSD (84 aa). Residues 97–106 show a composition bias toward polar residues; sequence MLQQLAQQLK. Phe-119 carries the post-translational modification Phenylalanine amide. A compositionally biased stretch (basic and acidic residues) spans 120-131; sequence GKRESRRSFGSD. Positions 123 to 131 are excised as a propeptide; sequence ESRRSFGSD.

Belongs to the RFamide neuropeptide family.

It localises to the secreted. Functionally, ligand for the G-protein coupled receptor QRFPR. This is QRFP-like peptide from Branchiostoma floridae (Florida lancelet).